The chain runs to 351 residues: Photosystem II D2 protein (351 aa).

Residues 39 to 59 (CAYLALGGWLTGTTFVTSWYT) form a helical membrane-spanning segment. His-116 is a chlorophyll a binding site. The chain crosses the membrane as a helical span at residues 123-139 (GFMLRQFEIARLVGIRP). Pheophytin a contacts are provided by Gln-128 and Asn-141. Residues 151–164 (VFVSVFLMYPLGQS) traverse the membrane as a helical segment. His-196 provides a ligand contact to chlorophyll a. A helical membrane pass occupies residues 206–226 (GALLCAIHGATVENTLFEDGE). A plastoquinone is bound by residues His-213 and Phe-260. His-213 contributes to the Fe cation binding site. His-267 is a binding site for Fe cation. A helical transmembrane segment spans residues 277–293 (GLWMSAIGIVGLALNLR).

The protein belongs to the reaction center PufL/M/PsbA/D family. PSII is composed of 1 copy each of membrane proteins PsbA, PsbB, PsbC, PsbD, PsbE, PsbF, PsbH, PsbI, PsbJ, PsbK, PsbL, PsbM, PsbT, PsbX, PsbY, PsbZ, Psb30/Ycf12, peripheral proteins PsbO, CyanoQ (PsbQ), PsbU, PsbV and a large number of cofactors. It forms dimeric complexes. The D1/D2 heterodimer binds P680, chlorophylls that are the primary electron donor of PSII, and subsequent electron acceptors. It shares a non-heme iron and each subunit binds pheophytin, quinone, additional chlorophylls, carotenoids and lipids. There is also a Cl(-1) ion associated with D1 and D2, which is required for oxygen evolution. The PSII complex binds additional chlorophylls, carotenoids and specific lipids. is required as a cofactor.

It localises to the cellular thylakoid membrane. It catalyses the reaction 2 a plastoquinone + 4 hnu + 2 H2O = 2 a plastoquinol + O2. Its function is as follows. Photosystem II (PSII) is a light-driven water:plastoquinone oxidoreductase that uses light energy to abstract electrons from H(2)O, generating O(2) and a proton gradient subsequently used for ATP formation. It consists of a core antenna complex that captures photons, and an electron transfer chain that converts photonic excitation into a charge separation. The D1/D2 (PsbA/PsbD) reaction center heterodimer binds P680, the primary electron donor of PSII as well as several subsequent electron acceptors. D2 is needed for assembly of a stable PSII complex. This is Photosystem II D2 protein from Crocosphaera subtropica (strain ATCC 51142 / BH68) (Cyanothece sp. (strain ATCC 51142)).